A 555-amino-acid polypeptide reads, in one-letter code: Dimethylaniline monooxygenase [N-oxide-forming] 4 (555 aa).

FAD-binding positions include 9–13 (GAGVS), E32, and 40–41 (LW). NADP(+) contacts are provided by residues 60–61 (TN) and 195–198 (SGGD). The chain crosses the membrane as a helical span at residues 515–532 (YLKVWGAPLLLASVLLIC).

The protein belongs to the FMO family. It depends on FAD as a cofactor. As to expression, kidney and liver.

The protein localises to the microsome membrane. It is found in the endoplasmic reticulum membrane. It carries out the reaction N,N-dimethylaniline + NADPH + O2 + H(+) = N,N-dimethylaniline N-oxide + NADP(+) + H2O. This protein is involved in the oxidative metabolism of a variety of xenobiotics such as drugs and pesticides. This chain is Dimethylaniline monooxygenase [N-oxide-forming] 4 (FMO4), found in Oryctolagus cuniculus (Rabbit).